The primary structure comprises 56 residues: Sperm protamine P1 (56 aa).

The tract at residues R1–R56 is disordered.

In terms of processing, P2 is phosphorylated in immature sperm. It is dephosphorylated in mature sperm allowing a stronger interaction with DNA. In terms of tissue distribution, testis.

The protein resides in the nucleus. Its subcellular location is the chromosome. Protamines substitute for histones in the chromatin of sperm during the haploid phase of spermatogenesis. They compact sperm DNA into a highly condensed, stable and inactive complex. Its function is as follows. Octopus spermiogenesis is characterized by a double nuclear protein transition: Histones are first replaced by P1, which allows the chromatin to adopt a shape that is not as relaxed as with histones. The majority of P1 is later replaced by P2, forming a compact chromatin. P2 is the main protamine of sperm. The protein is Sperm protamine P1 of Octopus vulgaris (Common octopus).